The following is a 348-amino-acid chain: Dihydroorotase (348 aa).

Residues histidine 14 and histidine 16 each contribute to the Zn(2+) site. Residues 16–18 (HLR) and asparagine 42 each bind substrate. Zn(2+)-binding residues include lysine 100, histidine 137, and histidine 175. Lysine 100 is modified (N6-carboxylysine). A substrate-binding site is contributed by histidine 137. Leucine 220 lines the substrate pocket. Aspartate 248 is a Zn(2+) binding site. Aspartate 248 is a catalytic residue. Positions 252 and 264 each coordinate substrate.

It belongs to the metallo-dependent hydrolases superfamily. DHOase family. Class II DHOase subfamily. As to quaternary structure, homodimer. Zn(2+) is required as a cofactor.

It carries out the reaction (S)-dihydroorotate + H2O = N-carbamoyl-L-aspartate + H(+). It participates in pyrimidine metabolism; UMP biosynthesis via de novo pathway; (S)-dihydroorotate from bicarbonate: step 3/3. In terms of biological role, catalyzes the reversible cyclization of carbamoyl aspartate to dihydroorotate. The chain is Dihydroorotase from Pseudomonas fluorescens (strain ATCC BAA-477 / NRRL B-23932 / Pf-5).